Here is a 190-residue protein sequence, read N- to C-terminus: Coat protein (190 aa).

This sequence belongs to the potexvirus capsid protein family.

It localises to the virion. Functionally, required for genome encapsidation. Forms ribonucleoprotein complexes along with TGB1 helicase and viral RNA. This is Coat protein from White clover mosaic virus (strain M) (WCMV).